A 393-amino-acid chain; its full sequence is Probable N-acetyl-LL-diaminopimelate aminotransferase (393 aa).

Lysine 231 carries the N6-(pyridoxal phosphate)lysine modification.

This sequence belongs to the class-I pyridoxal-phosphate-dependent aminotransferase family. As to quaternary structure, homodimer. The cofactor is pyridoxal 5'-phosphate.

The protein resides in the cytoplasm. It catalyses the reaction N-acetyl-(2S,6S)-2,6-diaminopimelate + 2-oxoglutarate = L-2-acetamido-6-oxoheptanedioate + L-glutamate. It functions in the pathway amino-acid biosynthesis; L-lysine biosynthesis via DAP pathway; LL-2,6-diaminopimelate from (S)-tetrahydrodipicolinate (acetylase route): step 2/3. Functionally, essential for murein biosynthesis. Probably catalyzes the conversion of L-2-acetamido-6-oxopimelate to N-acetyl-LL-2,6-diaminopimelate. The chain is Probable N-acetyl-LL-diaminopimelate aminotransferase from Bacillus subtilis (strain 168).